We begin with the raw amino-acid sequence, 166 residues long: Interleukin-3 (166 aa).

The first 27 residues, 1–27 (MVLASSTTSILCMLLPLLMLFHQGLQI), serve as a signal peptide directing secretion. Disulfide bonds link Cys-43–Cys-106 and Cys-105–Cys-166. 2 N-linked (GlcNAc...) asparagine glycosylation sites follow: Asn-60 and Asn-70. The interval 145–166 (SVSRPPQPTSSSDNFRPMTVEC) is disordered.

It belongs to the IL-3 family. As to quaternary structure, monomer. As to expression, activated T-cells, mast cells, natural killer cells.

Its subcellular location is the secreted. Functionally, cytokine secreted predominantly by activated T-lymphocytes as well as mast cells and osteoblastic cells that controls the production and differentiation of hematopoietic progenitor cells into lineage-restricted cells. Also stimulates mature basophils, eosinophils, and monocytes to become functionally activated. In addition, plays an important role in neural cell proliferation and survival. Participates as well in bone homeostasis and inhibits osteoclast differentiation by preventing NF-kappa-B nuclear translocation and activation. Mechanistically, exerts its biological effects through a receptor composed of IL3RA subunit and a signal transducing subunit IL3RB. Receptor stimulation results in the rapid activation of JAK2 kinase activity leading to STAT5-mediated transcriptional program. Alternatively, contributes to cell survival under oxidative stress in non-hematopoietic systems by activating pathways mediated by PI3K/AKT and ERK. This is Interleukin-3 (Il3) from Rattus norvegicus (Rat).